The following is a 344-amino-acid chain: Calcium homeostasis modulator protein 3 (344 aa).

The Cytoplasmic segment spans residues 1–20; it reads MDKFRMLFQHFQSSSESVMN. A central pore region spans residues 9 to 36; it reads QHFQSSSESVMNGICLLLAAVTVKLYSS. Residues 21–36 traverse the membrane as a helical segment; the sequence is GICLLLAAVTVKLYSS. Residues 37-48 lie on the Extracellular side of the membrane; the sequence is FDFNCPCLVHYN. Intrachain disulfides connect Cys-41–Cys-126 and Cys-43–Cys-157. A helical transmembrane segment spans residues 49-71; that stretch reads ALYGLGLLLTPPLALFLCGLLAN. Over 72–98 the chain is Cytoplasmic; the sequence is RQSVVMVEEWRRPAGHRRKDPGIIRYM. Cys-99 carries S-palmitoyl cysteine lipidation. A helical transmembrane segment spans residues 99-124; sequence CSSVLQRALAAPLVWILLALLDGKCF. The Extracellular portion of the chain corresponds to 125 to 176; sequence VCAFSSSVDPEKFLDFANMTPSQVQLFLAKVPCKEDELVRDSPARKAVSRYL. Asn-142 carries an N-linked (GlcNAc...) asparagine glycan. The chain crosses the membrane as a helical span at residues 177-202; it reads RCLSQAIGWSVTLLLIIAAFLARCLR. 2 S-palmitoyl cysteine lipidation sites follow: Cys-200 and Cys-204. At 203–344 the chain is on the cytoplasmic side; sequence PCFDQTVFLQ…GTRLSQHTDV (142 aa).

It belongs to the CALHM family. Associates with CALHM1 as a pore-forming subunit in a hetero-hexameric channel complex. N-glycosylated. Post-translationally, palmitoylated by ZDHHC3 and ZDHHC15. Palmitoylation positively regulates CALHM1:CALHM3 channel conductance. In terms of tissue distribution, specifically expressed in circumvallate taste bud cells.

The protein localises to the basolateral cell membrane. It carries out the reaction ATP(in) = ATP(out). The enzyme catalyses Ca(2+)(in) = Ca(2+)(out). The catalysed reaction is Na(+)(in) = Na(+)(out). It catalyses the reaction K(+)(in) = K(+)(out). It carries out the reaction chloride(in) = chloride(out). Functionally, pore-forming subunit of gustatory voltage-gated ion channels required for sensory perception of sweet, bitter and umami tastes. With CALHM1 forms a fast-activating voltage-gated ATP-release channel in type II taste bud cells, ATP acting as a neurotransmitter to activate afferent neural gustatory pathways. Acts both as a voltage-gated and calcium-activated ion channel: mediates neuronal excitability in response to membrane depolarization and low extracellular Ca(2+) concentration. Has poor ion selectivity and forms a wide pore (around 14 Angstroms) that mediates permeation of small ions including Ca(2+), Na(+), K(+) and Cl(-), as well as larger ions such as ATP(4-). In Homo sapiens (Human), this protein is Calcium homeostasis modulator protein 3.